Consider the following 88-residue polypeptide: Selenoprotein W (88 aa).

Positions 10-13 (CGAU) form a cross-link, cysteinyl-selenocysteine (Cys-Sec); redox-active. Position 13 (selenocysteine 13) is a non-standard amino acid, selenocysteine. Position 37 is an S-glutathionyl cysteine (cysteine 37).

This sequence belongs to the SelWTH family. Selenoprotein W subfamily. Interacts with DPYSL2, PRDX1, YWHAB, YWHAG, HSP70 and HSP90. In the embryo, expressed in the developing nervous system and in mesoderm-derived tissues such as heart and limbs. In the adult, predominantly expressed in brain, skeletal muscle and heart.

Its subcellular location is the cytoplasm. Plays a role as a glutathione (GSH)-dependent antioxidant. May be involved in a redox-related process. May play a role in the myopathies of selenium deficiency. This Mus musculus (Mouse) protein is Selenoprotein W.